The sequence spans 100 residues: Small ribosomal subunit protein uS14c (100 aa).

It belongs to the universal ribosomal protein uS14 family. In terms of assembly, part of the 30S ribosomal subunit.

It localises to the plastid. The protein localises to the chloroplast. Functionally, binds 16S rRNA, required for the assembly of 30S particles. The chain is Small ribosomal subunit protein uS14c from Chloranthus spicatus (Chulantree).